A 313-amino-acid chain; its full sequence is Endo-beta-N-acetylglucosaminidase H (313 aa).

A signal peptide (or 44) is located at residues 1 to 42 (MFTPVRRRVRTAALALSAAAALVLGSTAASGASATPSPAPAP). One can recognise a GH18 domain in the interval 51–307 (PTSVAYVEVN…SAFTRELYGS (257 aa)). The active-site Proton donor is the E174.

Belongs to the glycosyl hydrolase 18 family.

The catalysed reaction is an N(4)-(oligosaccharide-(1-&gt;3)-[oligosaccharide-(1-&gt;6)]-beta-D-Man-(1-&gt;4)-beta-D-GlcNAc-(1-&gt;4)-alpha-D-GlcNAc)-L-asparaginyl-[protein] + H2O = an oligosaccharide-(1-&gt;3)-[oligosaccharide-(1-&gt;6)]-beta-D-Man-(1-&gt;4)-D-GlcNAc + N(4)-(N-acetyl-beta-D-glucosaminyl)-L-asparaginyl-[protein]. Cleaves asparagine-linked oligomannose and hybrid, but not complex, oligosaccharides from glycoproteins. In Streptomyces plicatus, this protein is Endo-beta-N-acetylglucosaminidase H.